The sequence spans 314 residues: DDRGK domain-containing protein 1 (314 aa).

Residues 1–28 (MVAPVWYLVAAALLVGFILFLTRSRGRA) form a helical membrane-spanning segment. Residues 1–114 (MVAPVWYLVA…VEKPAETHLS (114 aa)) form a mediates interaction with CDK5RAP3 region. Residues 29–314 (ASAGQEPLHN…GRESPAQAPA (286 aa)) are Cytoplasmic-facing. Disordered regions lie at residues 31-75 (AGQE…SRLQ) and 100-186 (QEEE…QREH). Residues Ser-72 and Ser-114 each carry the phosphoserine modification. The mediates interaction with TRIP4 stretch occupies residues 118–216 (GAKKLRKLEE…MTEEQSQSFL (99 aa)). The segment covering 124–186 (KLEEKQARKA…AREEQAQREH (63 aa)) has biased composition (basic and acidic residues). The UFM1-interacting motif (UFIM) signature appears at 195-209 (AFVVEEEGVGETMTE). The mediates interaction with UFL1 stretch occupies residues 216–314 (LTEFINYIKQ…GRESPAQAPA (99 aa)). The 45-residue stretch at 229–273 (VLLEDLASQVGLRTQDTINRIQDLLAEGTITGVIDDRGKFIYITP) folds into the PCI domain. Lys-267 participates in a covalent cross-link: Glycyl lysine isopeptide (Lys-Gly) (interchain with G-Cter in UFM1).

This sequence belongs to the DDRGK1 family. Component of the UFM1 ribosome E3 ligase (UREL) complex, composed of UFL1, DDRGK1 and CDK5RAP3. Interacts with (unphosphorylated) ERN1/IRE1-alpha; interaction is dependent on UFM1 and takes place in response to endoplasmic reticulum stress, regulating ERN1/IRE1-alpha stability. Interacts with NFKBIA. Interacts with SOX9. Post-translationally, ubiquitinated. Ubiquitination probably triggers proteasomal degradation and is negatively regulated by UFL1, the enzyme involved in the ufmylation of DDRGK1. Ufmylated; conjugated to ubiquitin-like protein UFM1, probably at Lys-267 by UFL1. The relevance of ufmylation is however unclear: as DDRGK1 acts as a substrate adapters for ufmylation, it is uncertain whether ufmylation is a collateral effect of ufmylation process or is required to regulate its activity. In terms of tissue distribution, widely expressed (at protein level). In the brain, highest levels in medulla oblongata, followed by cerebral cortex, cerebellum and frontal lobe.

The protein resides in the endoplasmic reticulum membrane. Functionally, component of the UFM1 ribosome E3 ligase (UREL) complex, a multiprotein complex that catalyzes ufmylation of endoplasmic reticulum-docked proteins. The UREL complex plays a key role in ribosome recycling by mediating mono-ufmylation of the RPL26/uL24 subunit of the 60S ribosome following ribosome dissociation: ufmylation weakens the junction between post-termination 60S subunits and SEC61 translocons, promoting release and recycling of the large ribosomal subunit from the endoplasmic reticulum membrane. Ufmylation of RPL26/uL24 and subsequent 60S ribosome recycling either take place after normal termination of translation or after ribosome stalling during cotranslational translocation at the endoplasmic reticulum. Within the UREL complex, DDRGK1 tethers the complex to the endoplasmic reticulum membrane to restrict its activity to endoplasmic reticulum-docked ribosomes and acts as an ufmylation 'reader': following RPL26/uL24 ufmylation, DDRGK1 specifically binds to ufmylated RPL26/uL24 via its UFIM motif, resulting in stable association between the 60S ribosome and the UREL complex, followed by dissociation of the 60S ribosome subunit from the endoplasmic reticulum membrane. The UREL complex is also involved in reticulophagy in response to endoplasmic reticulum stress by promoting ufmylation of proteins such as CYB5R3 and RPN1, thereby promoting lysosomal degradation of ufmylated proteins. Ufmylation-dependent reticulophagy inhibits the unfolded protein response (UPR) by regulating ERN1/IRE1-alpha stability. Acts as a regulator of immunity by promoting differentiation of B-cells into plasma cells: acts by promoting expansion of the endoplasmic reticulum and regulating the unfolded protein response (UPR). May also be required for TRIP4 ufmylation. May play a role in NF-kappa-B-mediated transcription through regulation of the phosphorylation and the degradation of NFKBIA, the inhibitor of NF-kappa-B. Plays a role in cartilage development through SOX9, inhibiting the ubiquitin-mediated proteasomal degradation of this transcriptional regulator. Required for stabilization and ufmylation of ATG9A. This chain is DDRGK domain-containing protein 1, found in Homo sapiens (Human).